The chain runs to 689 residues: Methionine--tRNA ligase (689 aa).

The 'HIGH' region signature appears at 16-26 (PYANAGLHLGH). Zn(2+) contacts are provided by cysteine 147, cysteine 150, cysteine 160, and cysteine 163. Positions 342–346 (KMSKS) match the 'KMSKS' region motif. Lysine 345 is an ATP binding site. The 105-residue stretch at 585–689 (DFAKVDLRVG…AGVKPGMRVG (105 aa)) folds into the tRNA-binding domain.

The protein belongs to the class-I aminoacyl-tRNA synthetase family. MetG type 1 subfamily. In terms of assembly, homodimer. It depends on Zn(2+) as a cofactor.

It localises to the cytoplasm. It catalyses the reaction tRNA(Met) + L-methionine + ATP = L-methionyl-tRNA(Met) + AMP + diphosphate. Is required not only for elongation of protein synthesis but also for the initiation of all mRNA translation through initiator tRNA(fMet) aminoacylation. The polypeptide is Methionine--tRNA ligase (Chromobacterium violaceum (strain ATCC 12472 / DSM 30191 / JCM 1249 / CCUG 213 / NBRC 12614 / NCIMB 9131 / NCTC 9757 / MK)).